The sequence spans 329 residues: Alpha-tubulin N-acetyltransferase 1 (329 aa).

The N-acetyltransferase domain occupies 5 to 185 (SQVALLPKLS…NNFVVFHRYF (181 aa)). Acetyl-CoA-binding positions include 119–132 (FFVDTSFQRKGFGK) and 155–164 (SVKFLAFLQK). Disordered regions lie at residues 218–261 (PKYQ…GVGK) and 306–329 (GARRRMSPTRSGVQYNIISGTPEH). Polar residues predominate over residues 220–229 (YQSTTGPNNN). Positions 238 to 249 (TPPPPPLPPPLV) are enriched in pro residues. Over residues 313-329 (PTRSGVQYNIISGTPEH) the composition is skewed to polar residues.

It belongs to the acetyltransferase ATAT1 family.

The catalysed reaction is L-lysyl-[alpha-tubulin] + acetyl-CoA = N(6)-acetyl-L-lysyl-[alpha-tubulin] + CoA + H(+). Its function is as follows. Specifically acetylates 'Lys-40' in alpha-tubulin on the lumenal side of microtubules. Promotes microtubule destabilization and accelerates microtubule dynamics; this activity may be independent of acetylation activity. Acetylates alpha-tubulin with a slow enzymatic rate, due to a catalytic site that is not optimized for acetyl transfer. Enters the microtubule through each end and diffuses quickly throughout the lumen of microtubules. Acetylates only long/old microtubules because of its slow acetylation rate since it does not have time to act on dynamically unstable microtubules before the enzyme is released. In Trypanosoma cruzi (strain CL Brener), this protein is Alpha-tubulin N-acetyltransferase 1.